The chain runs to 409 residues: MAREKFERSKPHVNIGTIGHVDHGKTTLTAAISTVLAANSSGPGKKFDEIDSAPEERARGITINTAHVEYETAARHYAHVDCPGHADYVKNMITGAAQMDGAILVCSAADGPMPQTREHILLAKQVGVPHIVVFLNKADMVDDEELLELVELEVQELLSKYDFPGDEIPFVAGSALLALETAVGKPDIGRGEDKWVDTIFELMDKIDEYIPTPERETDKSFLMAVEDVFSITGRGTVATGRIERGQVKVGDTIEIIGLRETRTTTITGLEMFQKSLEEALAGDNVGILVRGIQKTDIERGMVLAAPGSITPHTKFEGEVYVLTKEEGGRHTPFFTGYRPQFYVRTTDVTGTIAQFTADDGSAAEMVMPGDRIKMTAQLIHPIAIEKGMRFAIREGGRTVGAGVVSKILE.

The region spanning 10–214 is the tr-type G domain; that stretch reads KPHVNIGTIG…KIDEYIPTPE (205 aa). A G1 region spans residues 19 to 26; sequence GHVDHGKT. 19–26 lines the GTP pocket; sequence GHVDHGKT. Residue Thr26 coordinates Mg(2+). A G2 region spans residues 60 to 64; the sequence is GITIN. Residues 81–84 form a G3 region; that stretch reads DCPG. GTP contacts are provided by residues 81–85 and 136–139; these read DCPGH and NKAD. Residues 136–139 are G4; that stretch reads NKAD. Positions 174–176 are G5; the sequence is SAL.

Belongs to the TRAFAC class translation factor GTPase superfamily. Classic translation factor GTPase family. EF-Tu/EF-1A subfamily.

The protein resides in the plastid. It localises to the chloroplast. It catalyses the reaction GTP + H2O = GDP + phosphate + H(+). Functionally, GTP hydrolase that promotes the GTP-dependent binding of aminoacyl-tRNA to the A-site of ribosomes during protein biosynthesis. The sequence is that of Elongation factor Tu, chloroplastic (tufA) from Rhodomonas salina (Cryptomonas salina).